A 260-amino-acid polypeptide reads, in one-letter code: Type III pantothenate kinase (260 aa).

6 to 13 contributes to the ATP binding site; that stretch reads DAGNTNIV. Position 108–111 (108–111) interacts with substrate; it reads GADR. The active-site Proton acceptor is D110. Residue D130 coordinates K(+). T133 is a binding site for ATP. T187 provides a ligand contact to substrate.

It belongs to the type III pantothenate kinase family. In terms of assembly, homodimer. The cofactor is NH4(+). K(+) serves as cofactor.

The protein resides in the cytoplasm. The enzyme catalyses (R)-pantothenate + ATP = (R)-4'-phosphopantothenate + ADP + H(+). It participates in cofactor biosynthesis; coenzyme A biosynthesis; CoA from (R)-pantothenate: step 1/5. In terms of biological role, catalyzes the phosphorylation of pantothenate (Pan), the first step in CoA biosynthesis. This is Type III pantothenate kinase from Rhizorhabdus wittichii (strain DSM 6014 / CCUG 31198 / JCM 15750 / NBRC 105917 / EY 4224 / RW1) (Sphingomonas wittichii).